Consider the following 87-residue polypeptide: Large ribosomal subunit protein bL27 (87 aa).

Residues 1–21 form a disordered region; the sequence is MAHKKAGGSSRNGRDSESKRL.

Belongs to the bacterial ribosomal protein bL27 family.

In Burkholderia mallei (strain NCTC 10247), this protein is Large ribosomal subunit protein bL27.